Consider the following 122-residue polypeptide: Large ribosomal subunit protein uL14 (122 aa).

This sequence belongs to the universal ribosomal protein uL14 family. In terms of assembly, part of the 50S ribosomal subunit. Forms a cluster with proteins L3 and L19. In the 70S ribosome, L14 and L19 interact and together make contacts with the 16S rRNA in bridges B5 and B8.

Its function is as follows. Binds to 23S rRNA. Forms part of two intersubunit bridges in the 70S ribosome. The polypeptide is Large ribosomal subunit protein uL14 (Rhodococcus erythropolis (strain PR4 / NBRC 100887)).